Reading from the N-terminus, the 1172-residue chain is Phytochrome B (1172 aa).

Residues 1–16 show a composition bias toward gly residues; it reads MVSGVGGSGGGRGGGR. The disordered stretch occupies residues 1–54; the sequence is MVSGVGGSGGGRGGGRGGEEEPSSSHTPNNRRGGEQAQSSGTKSLRPRSNTESM. Positions 24–54 are enriched in polar residues; sequence SSHTPNNRRGGEQAQSSGTKSLRPRSNTESM. The region spanning 252-433 is the GAF domain; it reads DIKLLCDTVV…AFGLQLNMEL (182 aa). Cysteine 357 contributes to the phytochromobilin binding site. 2 PAS domains span residues 652-723 and 786-857; these read VARE…LRGD and DYKA…MIVL. A Histidine kinase domain is found at 934–1153; sequence YICQVIKNPL…LIILELPVPR (220 aa).

Belongs to the phytochrome family. In terms of assembly, homodimer. Interacts with ADO1 and PKS4. Stabilized by interactions with PAPP5 and FYPP3 which are enhanced in the phosphorylated Pfr form. Interacts with VOZ1 and VOZ2. Binds, via its photosensory domain, to PTAC12/HMR/PAP5 when photoactivated; this interaction stimulates its localization to photobodies. Interacts with CRY1 specifically when in the dark/far-red (Pr) state, but not when red light-activated (Pfr). Interacts with PIF4 and PIF5 in response to low blue light (LBL). Component of a red light-dependent nuclear complex made of PHL, PHYB and CO. Interacts directly with PHL. Binds to UNE10/PIF8 when red light-activated (Pfr). When light-activated, interacts with PCH1 and PCHL. Associated with DRT111/RSN2/SFPS, SMP2 and SWAP1 in nuclear photobodies upon response to red light (Pfr form). In terms of processing, contains one covalently linked phytochromobilin chromophore. As to expression, expressed in fruits, flowers, leaves, stems, seedlings and roots.

The protein localises to the cytoplasm. It localises to the nucleus. The protein resides in the nucleoplasm. It is found in the nucleus speckle. Its function is as follows. Regulatory photoreceptor which exists in two forms that are reversibly interconvertible by light: the Pr form that absorbs maximally in the red region of the spectrum and the Pfr form that absorbs maximally in the far-red region. Photoconversion of Pr to Pfr induces an array of morphogenetic responses, whereas reconversion of Pfr to Pr cancels the induction of those responses. Pfr controls the expression of a number of nuclear genes including those encoding the small subunit of ribulose-bisphosphate carboxylase, chlorophyll A/B binding protein, protochlorophyllide reductase, rRNA, etc. It also controls the expression of its own gene(s) in a negative feedback fashion. Involved in the flowering time regulation. Involved in light-regulated circadian phase control that triggers stomatal aperture, stomatal conductance, and CO(2) assimilation. Implicated in red light perception, and, to a lower extent, in blue light signaling. Controls thermomorphogenesis in the daytime and regulates temperature responses by associating with the promoters of key target genes in a temperature-dependent manner and subsequently repressing their expression in a PIF4-dependent manner (temperature-responsive transcriptional regulator); this process requires PTAC12/HMR/PAP5 (transcriptional activator). Thermal timer that integrates temperature information over the course of the night. Detabilizes UNE10/PIF8 in red light. The sequence is that of Phytochrome B from Arabidopsis thaliana (Mouse-ear cress).